Reading from the N-terminus, the 286-residue chain is Phosphate import ATP-binding protein PstB (286 aa).

The 242-residue stretch at 40–281 (VVAKDFSIFY…PRDRMTEDYI (242 aa)) folds into the ABC transporter domain. 72-79 (GPSGCGKS) lines the ATP pocket.

This sequence belongs to the ABC transporter superfamily. Phosphate importer (TC 3.A.1.7) family. As to quaternary structure, the complex is composed of two ATP-binding proteins (PstB), two transmembrane proteins (PstC and PstA) and a solute-binding protein (PstS).

It localises to the cell inner membrane. The enzyme catalyses phosphate(out) + ATP + H2O = ADP + 2 phosphate(in) + H(+). In terms of biological role, part of the ABC transporter complex PstSACB involved in phosphate import. Responsible for energy coupling to the transport system. In Chlorobium luteolum (strain DSM 273 / BCRC 81028 / 2530) (Pelodictyon luteolum), this protein is Phosphate import ATP-binding protein PstB.